The following is a 331-amino-acid chain: Pyruvate synthase subunit PorB (331 aa).

[4Fe-4S] cluster is bound by residues cysteine 21, cysteine 24, cysteine 59, and cysteine 222.

As to quaternary structure, heterotetramer of one alpha, one beta, one delta and one gamma chain. [4Fe-4S] cluster serves as cofactor.

The catalysed reaction is 2 oxidized [2Fe-2S]-[ferredoxin] + pyruvate + CoA = 2 reduced [2Fe-2S]-[ferredoxin] + acetyl-CoA + CO2 + H(+). This Pyrococcus furiosus (strain ATCC 43587 / DSM 3638 / JCM 8422 / Vc1) protein is Pyruvate synthase subunit PorB (porB).